Consider the following 315-residue polypeptide: Methionyl-tRNA formyltransferase (315 aa).

113–116 (SILP) contributes to the (6S)-5,6,7,8-tetrahydrofolate binding site.

Belongs to the Fmt family.

The catalysed reaction is L-methionyl-tRNA(fMet) + (6R)-10-formyltetrahydrofolate = N-formyl-L-methionyl-tRNA(fMet) + (6S)-5,6,7,8-tetrahydrofolate + H(+). Attaches a formyl group to the free amino group of methionyl-tRNA(fMet). The formyl group appears to play a dual role in the initiator identity of N-formylmethionyl-tRNA by promoting its recognition by IF2 and preventing the misappropriation of this tRNA by the elongation apparatus. This is Methionyl-tRNA formyltransferase from Vibrio vulnificus (strain CMCP6).